The primary structure comprises 248 residues: NH(3)-dependent NAD(+) synthetase (248 aa).

An ATP-binding site is contributed by 31–38; that stretch reads GVSGGVDS. Residue aspartate 37 participates in Mg(2+) binding. Arginine 114 serves as a coordination point for deamido-NAD(+). Residue threonine 134 coordinates ATP. Glutamate 139 provides a ligand contact to Mg(2+). The deamido-NAD(+) site is built by lysine 147 and aspartate 154. Residues lysine 163 and serine 185 each contribute to the ATP site. 236–237 is a binding site for deamido-NAD(+); the sequence is HK.

Belongs to the NAD synthetase family. In terms of assembly, homodimer.

The catalysed reaction is deamido-NAD(+) + NH4(+) + ATP = AMP + diphosphate + NAD(+) + H(+). Its pathway is cofactor biosynthesis; NAD(+) biosynthesis; NAD(+) from deamido-NAD(+) (ammonia route): step 1/1. Catalyzes the ATP-dependent amidation of deamido-NAD to form NAD. Uses ammonia as a nitrogen source. This chain is NH(3)-dependent NAD(+) synthetase, found in Methanoregula boonei (strain DSM 21154 / JCM 14090 / 6A8).